A 677-amino-acid polypeptide reads, in one-letter code: Protein PALS1 (677 aa).

Residues 1 to 347 (MTTSHMNGYV…AQIKSPPIKE (347 aa)) form a required for the correct localization of PALS1 and PATJ at cell-cell contacts and the normal formation of tight junctions and adherens junctions region. The interval 39 to 81 (ELGARTLPVRRSAQLEKIRQQQEDRRRREEEGRSRQELDLNSS) is disordered. A compositionally biased stretch (basic and acidic residues) spans 51–76 (AQLEKIRQQQEDRRRREEEGRSRQEL). L27 domains follow at residues 121-178 (ALLE…NRPS) and 180-236 (PYPL…MQLE). The region spanning 258 to 338 (IVRIEKAKDI…VLSFVLIPSA (81 aa)) is the PDZ domain. Positions 347-419 (ETVVHVKAHF…PGKSFQQQRE (73 aa)) constitute an SH3 domain. The Guanylate kinase-like domain maps to 481–662 (KRPIALIGPP…SYQELLRLIN (182 aa)). 488–495 (GPPNCGQN) is a binding site for ATP. A disordered region spans residues 506–526 (PDRFAGPVPHTTRSRRDAEAN).

The protein belongs to the MAGUK family. In terms of tissue distribution, expressed in the retina and in the neural tube.

It localises to the apical cell membrane. The protein localises to the cell junction. The protein resides in the tight junction. Its function is as follows. Plays a role in tight junction biogenesis and in the establishment of cell polarity in epithelial cells. Also involved in adherens junction biogenesis. Required for polarized epithelial organization, cell-cell adhesion and remodeling of myocardial cells during heart tube elongation during embryogenesis. Functions in cellular patterning of the retina and development of the retinal pigmented epithelium. Also required for embryo body axis specification. In Danio rerio (Zebrafish), this protein is Protein PALS1 (pals1a).